Reading from the N-terminus, the 78-residue chain is Antitoxin VapB2 (78 aa).

A SpoVT-AbrB domain is found at 4–44 (AKIFMNGQSQAVRLPKEFRFSVKEVSVIPLGKGIVLQPLPN).

Belongs to the VapB family. Forms complexes with VapC2; probably VapC2(4):VapB2(2) in the absence of DNA, and VapC2(4):VapB2(4) in the presence of DNA. Crystallizes as heterodimers with stoichiometry VapC2(4):VapB2(4) in the presence of its probable promoter DNA. The heterodimers are in contact via alternative VapC-VapC and VapB-VapB interactions. This subunit contacts DNA.

Its function is as follows. Antitoxin component of a type II toxin-antitoxin (TA) system. Upon expression in E.coli or S.cerevisiae neutralizes the effect of cognate toxin VapC2, partially inhibits the RNase activity of VapC2. The chain is Antitoxin VapB2 (vapB2) from Rickettsia felis (strain ATCC VR-1525 / URRWXCal2) (Rickettsia azadi).